Consider the following 361-residue polypeptide: MSKFSFNIHHQHKKARSGIIATAHGEIRTPAFMPVGTRGTVKAMLPESVAETGADILLGNTYHLMLQPSAERIARLGGLHKFMNWDKPILTDSGGFQVMSLSKLRKITEEGVSFSSHINGDKYMLTPERSTAIQYLLGSTITMAFDECTPYPVTFEEAKTSMQLTTRWAHRSRNAFVKREGYAQFGIIQGSVYEELREQSAKGLVELDFDGYAIGGLAVGEGQELMFKVLDYAPDFLPQNKPRYLMGVGKPADIIGAVNRGIDMFDCVIPTRSGRNGQAFTKYGTVNICNSKYSGDNEPLEHDCPCPACTNYTKAYLHHLVRIGEILGSMLMTWHNLTYFQNLISRIREYIKLGKDFDFYS.

Aspartate 92 functions as the Proton acceptor in the catalytic mechanism. Substrate contacts are provided by residues aspartate 92 to phenylalanine 96, aspartate 146, glutamine 189, and glycine 216. Residues glycine 247–aspartate 253 form an RNA binding region. The Nucleophile role is filled by aspartate 266. The tract at residues threonine 271 to arginine 275 is RNA binding; important for wobble base 34 recognition. 4 residues coordinate Zn(2+): cysteine 304, cysteine 306, cysteine 309, and histidine 335.

The protein belongs to the queuine tRNA-ribosyltransferase family. As to quaternary structure, homodimer. Within each dimer, one monomer is responsible for RNA recognition and catalysis, while the other monomer binds to the replacement base PreQ1. The cofactor is Zn(2+).

The catalysed reaction is 7-aminomethyl-7-carbaguanine + guanosine(34) in tRNA = 7-aminomethyl-7-carbaguanosine(34) in tRNA + guanine. The protein operates within tRNA modification; tRNA-queuosine biosynthesis. Its function is as follows. Catalyzes the base-exchange of a guanine (G) residue with the queuine precursor 7-aminomethyl-7-deazaguanine (PreQ1) at position 34 (anticodon wobble position) in tRNAs with GU(N) anticodons (tRNA-Asp, -Asn, -His and -Tyr). Catalysis occurs through a double-displacement mechanism. The nucleophile active site attacks the C1' of nucleotide 34 to detach the guanine base from the RNA, forming a covalent enzyme-RNA intermediate. The proton acceptor active site deprotonates the incoming PreQ1, allowing a nucleophilic attack on the C1' of the ribose to form the product. After dissociation, two additional enzymatic reactions on the tRNA convert PreQ1 to queuine (Q), resulting in the hypermodified nucleoside queuosine (7-(((4,5-cis-dihydroxy-2-cyclopenten-1-yl)amino)methyl)-7-deazaguanosine). This chain is Queuine tRNA-ribosyltransferase, found in Rickettsia akari (strain Hartford).